The sequence spans 147 residues: Zinc finger HIT domain-containing protein 3 (147 aa).

Zn(2+) is bound by residues cysteine 3, cysteine 6, cysteine 14, cysteine 17, cysteine 22, cysteine 26, histidine 30, and cysteine 34. The HIT-type zinc finger occupies 3-34 (CVICLEKPKYRCPACRVPYCSVACFRKHKEQC). Residues 45-67 (IRSALPTKTXKPVENKDDDDSIA) form a disordered region. Serine 72 carries the phosphoserine modification.

Thyroid receptor interacting proteins (TRIPs) specifically interact with the ligand binding domain of the thyroid receptor (TR). Requires the presence of thyroid hormone for its interaction. Interacts with NUFIP1. Interacts (via HIT-type zinc finger) with the RUVBL1/RUVBL2 complex in the presence of ADP.

The protein resides in the cytoplasm. Its subcellular location is the nucleus. The polypeptide is Zinc finger HIT domain-containing protein 3 (ZNHIT3) (Macaca mulatta (Rhesus macaque)).